Reading from the N-terminus, the 224-residue chain is Response regulator protein GraR (224 aa).

The region spanning 2-115 (QILLVEDDNT…VLIAKLQAIY (114 aa)) is the Response regulatory domain. Aspartate 51 is modified (4-aspartylphosphate). Positions 126-224 (KRTLTWQDAV…KVGKGYMAHE (99 aa)) form a DNA-binding region, ompR/PhoB-type. A phosphothreonine mark is found at threonine 128, threonine 130, and threonine 149.

Interacts with GraX. In terms of processing, phosphorylated by GraS. Phosphorylated by Stk1; phosphorylation increases the DNA-binding activity of GraR.

It is found in the cytoplasm. Functionally, member of the two-component regulatory system GraR/GraS involved in resistance against cationic antimicrobial peptides (CAMPs). Upon phosphorylation by GraS, functions as a transcription regulator by direct binding to promoter regions of target genes such as adhesins, exoproteins, transporters, toxins, and proteins involved in cell wall synthesis. Down-regulates the expression of many genes involved in RNA and amino acid synthesis or glycolysis. The polypeptide is Response regulator protein GraR (graR) (Staphylococcus aureus (strain USA300)).